The chain runs to 253 residues: Sulfate transporter CysZ (253 aa).

The next 4 helical transmembrane spans lie at 31–51, 72–92, 151–171, and 222–242; these read FVIL…WWLF, LSYI…GYFF, IVLL…PVLW, and IPVL…AMWV.

The protein belongs to the CysZ family.

It is found in the cell inner membrane. High affinity, high specificity proton-dependent sulfate transporter, which mediates sulfate uptake. Provides the sulfur source for the cysteine synthesis pathway. This is Sulfate transporter CysZ from Escherichia fergusonii (strain ATCC 35469 / DSM 13698 / CCUG 18766 / IAM 14443 / JCM 21226 / LMG 7866 / NBRC 102419 / NCTC 12128 / CDC 0568-73).